The primary structure comprises 489 residues: Rhamnulokinase (489 aa).

Residue Ala-13–Arg-17 participates in ATP binding. An intrachain disulfide couples Cys-68 to Cys-222. Substrate is bound by residues Gly-83 and His-236–Thr-238. Asp-237 serves as the catalytic Proton acceptor. An ATP-binding site is contributed by Thr-259. Asn-296 contacts substrate. Residue Gln-304 participates in ATP binding. A disulfide bridge connects residues Cys-353 and Cys-370. Gly-402 provides a ligand contact to ATP. A disulfide bridge links Cys-413 with Cys-417.

It belongs to the rhamnulokinase family. It depends on Mg(2+) as a cofactor.

The enzyme catalyses L-rhamnulose + ATP = L-rhamnulose 1-phosphate + ADP + H(+). It participates in carbohydrate degradation; L-rhamnose degradation; glycerone phosphate from L-rhamnose: step 2/3. Functionally, involved in the catabolism of L-rhamnose (6-deoxy-L-mannose). Catalyzes the transfer of the gamma-phosphate group from ATP to the 1-hydroxyl group of L-rhamnulose to yield L-rhamnulose 1-phosphate. The polypeptide is Rhamnulokinase (Salmonella typhimurium (strain LT2 / SGSC1412 / ATCC 700720)).